The sequence spans 327 residues: Acetyl-coenzyme A carboxylase carboxyl transferase subunit beta (327 aa).

One can recognise a CoA carboxyltransferase N-terminal domain in the interval 24–293 (LWIKCPDTGQ…LTVTTAVEAP (270 aa)). Positions 293-311 (PAEAAAKAEPEATTTEQPV) are enriched in low complexity. The disordered stretch occupies residues 293-327 (PAEAAAKAEPEATTTEQPVAPAPTEPPAQPAAPQA). Positions 312-327 (APAPTEPPAQPAAPQA) are enriched in pro residues.

The protein belongs to the AccD/PCCB family. In terms of assembly, acetyl-CoA carboxylase is a heterohexamer composed of biotin carboxyl carrier protein (AccB), biotin carboxylase (AccC) and two subunits each of ACCase subunit alpha (AccA) and ACCase subunit beta (AccD).

It localises to the cytoplasm. The enzyme catalyses N(6)-carboxybiotinyl-L-lysyl-[protein] + acetyl-CoA = N(6)-biotinyl-L-lysyl-[protein] + malonyl-CoA. It functions in the pathway lipid metabolism; malonyl-CoA biosynthesis; malonyl-CoA from acetyl-CoA: step 1/1. Component of the acetyl coenzyme A carboxylase (ACC) complex. Biotin carboxylase (BC) catalyzes the carboxylation of biotin on its carrier protein (BCCP) and then the CO(2) group is transferred by the transcarboxylase to acetyl-CoA to form malonyl-CoA. The polypeptide is Acetyl-coenzyme A carboxylase carboxyl transferase subunit beta (Rhodopseudomonas palustris (strain TIE-1)).